A 186-amino-acid chain; its full sequence is MAAKYVFVVAACSALAQAGIVRRDASTPLQDLEKHAAEFQKTFSEQLNAFTNSKDTKEFNTALKEGSDSVLQQLNALASSLQKALNDANGKAKEALEQTRTNLERTAEELRRAHPDVERQAGALRDRLQTAVQATVQETQKLAKTVGANLEETNKKLAPQIKSAYDDFVKQAQEVQKKLHEAASKQ.

The first 18 residues, 1-18, serve as a signal peptide directing secretion; it reads MAAKYVFVVAACSALAQA. A propeptide spanning residues 19-23 is cleaved from the precursor; that stretch reads GIVRR.

The protein belongs to the insect apolipophorin-3 family. As to quaternary structure, equilibrium between a soluble monomer and a bound lipoprotein form. Apolipophorin-3 associates with lipophorin during lipid loading until each particle contains 9 or 14 molecules of apolipophorin-3. Expressed in hemolymph. Also found in hemocytes and fat body.

Its subcellular location is the secreted. Assists in the loading of diacylglycerol, generated from triacylglycerol stores in the fat body through the action of adipokinetic hormone, into lipophorin, the hemolymph lipoprotein. It increases the lipid carrying capacity of lipophorin by covering the expanding hydrophobic surface resulting from diacylglycerol uptake. It thus plays a critical role in the transport of lipids during flight in several species of insects. Has antibacterial activity against the Gram-positive bacteria L.monocytogenes (MIC=6.5 uM). Lacks antibacterial activity against the Gram-positive bacteria B.circulans, M.luteus, S.aureus, and S.lutea, and the Gram-negative bacteria E.coli D31, E.coli ATCC 25922, and S.typhimurium. Lacks antifungal activity against S.cerevisiae, P.pastoris, Z.marxianus, C.albicans, C.wickerhamii, A.niger, F.oxysporum, and T.harizianum. This is Apolipophorin-3 from Galleria mellonella (Greater wax moth).